A 314-amino-acid polypeptide reads, in one-letter code: MRVIYMGTPEFAVAPLHSLIGNQYDVVAVFTQPDRPKGRGKKLQSTPVKELALAHGLMLYQPIKLRESSVVEIIKSLEPDVIVVVAYGQILSKEILEIPTYGCINVHASLLPKYRGAAPIHRAIIDGEKKTGVTTMYMDVGLDTGDMLLKKEVLIGADETAGELRDRLMALGADTLIKTLNQVQRGTLVGEKQNDLESSYAAMLDKGLGQINWNQSAEAIRNLIRGTIPWPMAYTTYLGNRVKIWKSRIEESEVSGKPGEILKVEKSGIFVKTGQGTLVIERIQFSGKKPLDVREYLAGNTIEKGVLLGEEDGN.

109–112 lines the (6S)-5,6,7,8-tetrahydrofolate pocket; sequence SLLP.

Belongs to the Fmt family.

The enzyme catalyses L-methionyl-tRNA(fMet) + (6R)-10-formyltetrahydrofolate = N-formyl-L-methionyl-tRNA(fMet) + (6S)-5,6,7,8-tetrahydrofolate + H(+). Functionally, attaches a formyl group to the free amino group of methionyl-tRNA(fMet). The formyl group appears to play a dual role in the initiator identity of N-formylmethionyl-tRNA by promoting its recognition by IF2 and preventing the misappropriation of this tRNA by the elongation apparatus. The polypeptide is Methionyl-tRNA formyltransferase (Alkaliphilus metalliredigens (strain QYMF)).